Reading from the N-terminus, the 293-residue chain is MDKSTWTTKVGLAQMLKGGVIMDVVTPEQARIAEEAGAVAVMALERVPADIRAQGGVARMSDPELILAIKEAVTIPVMAKARIGHFVEAQILEALGIDYIDESEVLTPADEEHHINKHKFRVPFVCGCRNLGEALRRVAEGAAMLRTKGEAGTGNVVEAVRHARAVYSEIRRLQSMDEDELFTYAKNIQAPYELVRQVAETGRLPVVNFAAGGIATPADAALLMQLGVDGVFVGSGIFKSGDPARRARAIVAATTHYNEPEIIAEVSRGLGEAMVGIEISKIPHDQLMAERGW.

D-ribose 5-phosphate is bound at residue Asp23. Residue Lys80 is the Schiff-base intermediate with D-ribose 5-phosphate of the active site. A D-ribose 5-phosphate-binding site is contributed by Gly152. Arg164 contributes to the D-glyceraldehyde 3-phosphate binding site. D-ribose 5-phosphate contacts are provided by residues Gly213 and Gly234–Ser235.

Belongs to the PdxS/SNZ family. As to quaternary structure, in the presence of PdxT, forms a dodecamer of heterodimers.

It carries out the reaction aldehydo-D-ribose 5-phosphate + D-glyceraldehyde 3-phosphate + L-glutamine = pyridoxal 5'-phosphate + L-glutamate + phosphate + 3 H2O + H(+). It participates in cofactor biosynthesis; pyridoxal 5'-phosphate biosynthesis. Its function is as follows. Catalyzes the formation of pyridoxal 5'-phosphate from ribose 5-phosphate (RBP), glyceraldehyde 3-phosphate (G3P) and ammonia. The ammonia is provided by the PdxT subunit. Can also use ribulose 5-phosphate and dihydroxyacetone phosphate as substrates, resulting from enzyme-catalyzed isomerization of RBP and G3P, respectively. In Roseiflexus sp. (strain RS-1), this protein is Pyridoxal 5'-phosphate synthase subunit PdxS.